Reading from the N-terminus, the 393-residue chain is 4-hydroxyphenylpyruvate dioxygenase (393 aa).

VOC domains lie at 17–148 (AFDH…LLER) and 179–339 (FLDH…IFSK). Fe cation is bound by residues His-182, His-267, and Glu-350.

The protein belongs to the 4HPPD family. The cofactor is Fe cation.

It carries out the reaction 3-(4-hydroxyphenyl)pyruvate + O2 = homogentisate + CO2. It participates in amino-acid degradation; L-phenylalanine degradation; acetoacetate and fumarate from L-phenylalanine: step 3/6. Its function is as follows. Key enzyme in the degradation of tyrosine. The protein is 4-hydroxyphenylpyruvate dioxygenase (hpd-1) of Caenorhabditis briggsae.